The sequence spans 205 residues: Inactive ribonuclease-like protein 9 (205 aa).

The signal sequence occupies residues 1–26; it reads MMRTLITIHPLPLLLLLQQLLQPVQF. Disulfide bonds link cysteine 98/cysteine 153, cysteine 116/cysteine 168, and cysteine 123/cysteine 130. Residues asparagine 131 and asparagine 143 are each glycosylated (N-linked (GlcNAc...) asparagine).

The protein belongs to the pancreatic ribonuclease family.

It localises to the secreted. Does not exhibit any ribonuclease activity. This is Inactive ribonuclease-like protein 9 (RNASE9) from Gorilla gorilla gorilla (Western lowland gorilla).